Reading from the N-terminus, the 142-residue chain is Hemoglobin subunit alpha-2 (142 aa).

A Globin domain is found at 2 to 142 (VLSAADKTNV…VSTVLTSKYR (141 aa)). Residue H59 participates in O2 binding. H88 serves as a coordination point for heme b.

It belongs to the globin family. In terms of assembly, heterotetramer of two alpha chains and two beta chains. Red blood cells.

In terms of biological role, involved in oxygen transport from the lung to the various peripheral tissues. Functionally, hemopressin acts as an antagonist peptide of the cannabinoid receptor CNR1. Hemopressin-binding efficiently blocks cannabinoid receptor CNR1 and subsequent signaling. The chain is Hemoglobin subunit alpha-2 (HBA2) from Equus quagga burchellii (Burchell's zebra).